The chain runs to 77 residues: U10-lycotoxin-Ls1b (77 aa).

Positions 1–20 are cleaved as a signal peptide; sequence MKLIIFTGLVLFAIVSLIEA. A propeptide spanning residues 21-26 is cleaved from the precursor; it reads EEESGR.

This sequence belongs to the neurotoxin 19 (CSTX) family. 09 (U10-Lctx) subfamily. In terms of processing, contains 4 disulfide bonds. As to expression, expressed by the venom gland.

The protein resides in the secreted. The chain is U10-lycotoxin-Ls1b from Lycosa singoriensis (Wolf spider).